The sequence spans 396 residues: Gap junction gamma-1 protein (396 aa).

The Cytoplasmic portion of the chain corresponds to 1-18 (MSWSFLTRLLEEIHNHST). The helical transmembrane segment at 19–39 (FVGKIWLTVLIVFRIVLTAVG) threads the bilayer. Topologically, residues 40 to 75 (GESIYYDEQSKFVCNTEQPGCENVCYDAFAPLSHVR) are extracellular. The chain crosses the membrane as a helical span at residues 76-96 (FWVFQIILVATPSVMYLGYAI). At 97 to 175 (HKIAKMEHGE…RRIREDGLMK (79 aa)) the chain is on the cytoplasmic side. The tract at residues 145–165 (ELESEKENKEQSQPKPKHDGR) is disordered. Residues 147 to 156 (ESEKENKEQS) are compositionally biased toward basic and acidic residues. Residues 176–198 (IYVLQLLARTVFEVGFLIGQYFL) form a helical membrane-spanning segment. Residues 199–229 (YGFQVHPFYVCSRLPCPHKIDCFISRPTEKT) are Extracellular-facing. A helical transmembrane segment spans residues 230–250 (IFLLIMYGVTGLCLLLNIWEM). The Cytoplasmic portion of the chain corresponds to 251-396 (LHLGFGTIRD…SGDGKTSVWI (146 aa)). Positions 303–358 (ELSNAKIAYKQNKANIAQEQQYGSHEEHLPADLETLQREIRMAQERLDLAIQAYHH) form a coiled coil. Positions 357–396 (HHQNNPHGPREKKAKVGSKSGSNKSSISSKSGDGKTSVWI) are disordered. Low complexity predominate over residues 373–396 (GSKSGSNKSSISSKSGDGKTSVWI).

It belongs to the connexin family. Gamma-type subfamily. In terms of assembly, a connexon is composed of a hexamer of connexins. Interacts with CNST.

It localises to the cell membrane. The protein localises to the cell junction. The protein resides in the gap junction. In terms of biological role, one gap junction consists of a cluster of closely packed pairs of transmembrane channels, the connexons, through which materials of low MW diffuse from one cell to a neighboring cell. The polypeptide is Gap junction gamma-1 protein (GJC1) (Cricetulus griseus (Chinese hamster)).